Reading from the N-terminus, the 289-residue chain is 26S proteasome non-ATPase regulatory subunit 8 (289 aa).

Ser45 carries the phosphoserine modification. Positions 101–270 constitute a PCI domain; that stretch reads PSFERYMAQL…QQKPEDTTIP (170 aa). Residue Lys236 forms a Glycyl lysine isopeptide (Lys-Gly) (interchain with G-Cter in SUMO2) linkage.

The protein belongs to the proteasome subunit S14 family. Component of the 19S proteasome regulatory particle complex. The 26S proteasome consists of a 20S core particle (CP) and two 19S regulatory subunits (RP). The regulatory particle is made of a lid composed of 9 subunits including PSMD8, a base containing 6 ATPases and few additional components. Interacts with DDI2. Interacts with TASOR.

Component of the 26S proteasome, a multiprotein complex involved in the ATP-dependent degradation of ubiquitinated proteins. This complex plays a key role in the maintenance of protein homeostasis by removing misfolded or damaged proteins, which could impair cellular functions, and by removing proteins whose functions are no longer required. Therefore, the proteasome participates in numerous cellular processes, including cell cycle progression, apoptosis, or DNA damage repair. This chain is 26S proteasome non-ATPase regulatory subunit 8 (PSMD8), found in Pongo abelii (Sumatran orangutan).